The chain runs to 276 residues: Large ribosomal subunit protein uL2 (276 aa).

The tract at residues 221-276 is disordered; the sequence is RGSVMNPNDHPHGGGEGRAPIGRKAPVTPWGKPTLGLKTRKKKNKSDQYIIRRRKK.

The protein belongs to the universal ribosomal protein uL2 family. In terms of assembly, part of the 50S ribosomal subunit. Forms a bridge to the 30S subunit in the 70S ribosome.

Its function is as follows. One of the primary rRNA binding proteins. Required for association of the 30S and 50S subunits to form the 70S ribosome, for tRNA binding and peptide bond formation. It has been suggested to have peptidyltransferase activity; this is somewhat controversial. Makes several contacts with the 16S rRNA in the 70S ribosome. This is Large ribosomal subunit protein uL2 from Brevibacillus brevis (strain 47 / JCM 6285 / NBRC 100599).